A 936-amino-acid polypeptide reads, in one-letter code: Protein translocase subunit SecA (936 aa).

ATP-binding positions include Gln87, 105 to 109 (GEGKT), and Asp515. Zn(2+) contacts are provided by Cys920, Cys922, Cys931, and His932.

It belongs to the SecA family. As to quaternary structure, monomer and homodimer. Part of the essential Sec protein translocation apparatus which comprises SecA, SecYEG and auxiliary proteins SecDF-YajC and YidC. Zn(2+) serves as cofactor.

It is found in the cell inner membrane. The protein localises to the cytoplasm. The enzyme catalyses ATP + H2O + cellular proteinSide 1 = ADP + phosphate + cellular proteinSide 2.. Part of the Sec protein translocase complex. Interacts with the SecYEG preprotein conducting channel. Has a central role in coupling the hydrolysis of ATP to the transfer of proteins into and across the cell membrane, serving both as a receptor for the preprotein-SecB complex and as an ATP-driven molecular motor driving the stepwise translocation of polypeptide chains across the membrane. This is Protein translocase subunit SecA from Paraburkholderia xenovorans (strain LB400).